We begin with the raw amino-acid sequence, 904 residues long: Protein translocase subunit SecA (904 aa).

ATP-binding positions include Gln-89, 107-111, and Asp-496; that span reads GEGKT. The tract at residues 870–904 is disordered; sequence GGFQELSSGTPSPTVTVTTSSGGGTERKTSRRRKR. Over residues 876 to 889 the composition is skewed to low complexity; it reads SSGTPSPTVTVTTS.

It belongs to the SecA family. Monomer and homodimer. Part of the essential Sec protein translocation apparatus which comprises SecA, SecYEG and auxiliary proteins SecDF. Other proteins may also be involved.

It is found in the cell inner membrane. It localises to the cytoplasm. The catalysed reaction is ATP + H2O + cellular proteinSide 1 = ADP + phosphate + cellular proteinSide 2.. Part of the Sec protein translocase complex. Interacts with the SecYEG preprotein conducting channel. Has a central role in coupling the hydrolysis of ATP to the transfer of proteins into and across the cell membrane, serving as an ATP-driven molecular motor driving the stepwise translocation of polypeptide chains across the membrane. The sequence is that of Protein translocase subunit SecA from Leptospira borgpetersenii serovar Hardjo-bovis (strain L550).